Reading from the N-terminus, the 336-residue chain is Aldo-keto reductase str7 (336 aa).

Position 57 (Asp-57) interacts with NADP(+). Tyr-62 (proton donor) is an active-site residue. His-124 is a substrate binding site. NADP(+)-binding positions include 154 to 155 (SE), Gln-174, 206 to 220 (SPLG…YKSP), and 283 to 291 (KKIKYLEEN).

This sequence belongs to the aldo/keto reductase family. Aldo/keto reductase 2 subfamily.

Its pathway is mycotoxin biosynthesis. In terms of biological role, aldo-keto reductase; part of the gene cluster that mediates the biosynthesis of strobilurin A, an antifungal polyketide that contains a key beta-methoxyacrylate toxophore that targets the complex III of the mitochondrial electron transport chain. Strobilurin biosynthesis begins with construction of benzoyl CoA by step-wise elimination of ammonia from phenylalanine by the phenylalanine ammonia-lyase str11, oxygenation by str8 and retro-Claisen reaction to form benzoic acid, which is activated to its CoA thiolester benzoyl CoA by the dedicated CoA ligase str10. Benzoyl CoA forms the starter unit for the highly reducing polyketide synthase stpks1 that produces the polyketide prestrobilutin A. The FAD-dependent oxygenase str9 then catalyzes the key oxidative rearrangement responsible for the creation of the beta-methoxyacrylate toxophore. Str9 performs epoxidation of the 2,3 olefin of prestrobilutin A, followed by Meinwald rearrangement to furnish the aldehyde intermediate. Rapid enolization of the aldehyde intermediate would give the beta-methoxyacrylate skeleton and methylations catalyzed by str2 and str3 complete the synthesis and lead to the production of strobilurin A. The short-chain dehydrogenase stl2 and the dehydrogenase str4 play a role in the shunt pathway leading to the production of bolineol. The cluster encodes no obvious halogenase gene that could be involved in production of strobilurin B, nor any obvious dimethylallyl-transferase that could be involved in the production of strobilurin G. It is possible that unknown proteins encoded in, or near, the cluster (such as str1 or stl1) may form new classes of halogenases or dimethylally-transferases, or that the responsible genes are located elsewhere on the genome. Similarly, proteins encoded by str5/str6 hydrolases appear to have no chemical role in the biosynthesis of strobilurin A. Finally, no obvious self-resistance gene is found within the cluster. This Strobilurus tenacellus protein is Aldo-keto reductase str7.